Consider the following 373-residue polypeptide: Acyl-CoA dehydrogenase FadE27 (373 aa).

Residues arginine 251, histidine 327, and glycine 331 each coordinate FAD.

It belongs to the acyl-CoA dehydrogenase family. Heterotetramer (dimer of heterodimers) composed of FadE26 and FadE27. FAD is required as a cofactor.

It catalyses the reaction (25S)-3-oxocholest-4-en-26-oyl-CoA + A = 3-oxo-cholest-4,24-dien-26-oyl-CoA + AH2. The protein operates within steroid metabolism; cholesterol degradation. Uncompetitively inhibited by high concentration of 3-OCS-CoA. Involved in the first cycle of side chain dehydrogenation in the beta-oxidation of cholesterol catabolism. It contributes partly to the virulence by increasing the efficiency of beta-oxidation. Catalyzes the dehydrogenation of acyl-CoA ester side chains of (25S)-3-oxo-cholest-4-en-26-oyl-CoA (3-OCS-CoA) to yield (24E)-3-oxo-cholest-4,24-dien-26-oyl-CoA. Also able to dehydrogenate steroyl-CoA such as 3-oxo-chol-4-en-24-oyl-CoA (3-OCO-CoA) as well as 3-oxo-4-pregnene-20-carboxyl-CoA (3-OPC-CoA). It dehydrogenates only (25S)-OCS-CoA diastereomer. The polypeptide is Acyl-CoA dehydrogenase FadE27 (fadE27) (Mycobacterium tuberculosis (strain ATCC 25618 / H37Rv)).